A 45-amino-acid chain; its full sequence is Large ribosomal subunit protein bL34 (45 aa).

Residues 1-45 (MTKRTLGGTVRKQKRTSGFRARMRSHTGQNVIRARRKKGRHRLTV) are disordered. Basic residues-rich tracts occupy residues 11–25 (RKQKRTSGFRARMRS) and 33–45 (RARRKKGRHRLTV).

This sequence belongs to the bacterial ribosomal protein bL34 family.

In Picosynechococcus sp. (strain ATCC 27264 / PCC 7002 / PR-6) (Agmenellum quadruplicatum), this protein is Large ribosomal subunit protein bL34.